The following is a 275-amino-acid chain: Thymidylate synthase (275 aa).

138-139 is a binding site for dUMP; that stretch reads RR. The active-site Nucleophile is the Cys-158. Residues 178–181, Asn-189, and 219–221 contribute to the dUMP site; these read RSCD and HIY. (6R)-5,10-methylene-5,6,7,8-tetrahydrofolate is bound at residue Asp-181. (6R)-5,10-methylene-5,6,7,8-tetrahydrofolate is bound at residue Ala-274.

The protein belongs to the thymidylate synthase family. Bacterial-type ThyA subfamily. In terms of assembly, homodimer.

It localises to the cytoplasm. It catalyses the reaction dUMP + (6R)-5,10-methylene-5,6,7,8-tetrahydrofolate = 7,8-dihydrofolate + dTMP. The protein operates within pyrimidine metabolism; dTTP biosynthesis. Catalyzes the reductive methylation of 2'-deoxyuridine-5'-monophosphate (dUMP) to 2'-deoxythymidine-5'-monophosphate (dTMP) while utilizing 5,10-methylenetetrahydrofolate (mTHF) as the methyl donor and reductant in the reaction, yielding dihydrofolate (DHF) as a by-product. This enzymatic reaction provides an intracellular de novo source of dTMP, an essential precursor for DNA biosynthesis. This chain is Thymidylate synthase, found in Fusobacterium nucleatum subsp. nucleatum (strain ATCC 25586 / DSM 15643 / BCRC 10681 / CIP 101130 / JCM 8532 / KCTC 2640 / LMG 13131 / VPI 4355).